Consider the following 242-residue polypeptide: Triosephosphate isomerase (242 aa).

8–10 contacts substrate; that stretch reads NWK. The Electrophile role is filled by His98. Glu167 (proton acceptor) is an active-site residue. Substrate-binding positions include Gly173, Ser205, and 226–227; that span reads GG.

It belongs to the triosephosphate isomerase family. As to quaternary structure, homodimer.

The protein resides in the cytoplasm. It catalyses the reaction D-glyceraldehyde 3-phosphate = dihydroxyacetone phosphate. The protein operates within carbohydrate biosynthesis; gluconeogenesis. It participates in carbohydrate degradation; glycolysis; D-glyceraldehyde 3-phosphate from glycerone phosphate: step 1/1. Involved in the gluconeogenesis. Catalyzes stereospecifically the conversion of dihydroxyacetone phosphate (DHAP) to D-glyceraldehyde-3-phosphate (G3P). In Mesomycoplasma hyopneumoniae (strain 7448) (Mycoplasma hyopneumoniae), this protein is Triosephosphate isomerase.